A 504-amino-acid chain; its full sequence is CaM kinase-like vesicle-associated protein (504 aa).

The Protein kinase domain maps to 24 to 286 (YDLGQVVKTE…AEEAISHEWI (263 aa)). Positions 378–504 (KSDDMASADR…AQESQRVETS (127 aa)) are disordered. Phosphoserine is present on serine 384. Positions 390-431 (TPATDGSATPATDGSVTPATDGSITPATDGSVTPATDRSATP) are enriched in polar residues. Phosphothreonine is present on residues threonine 438 and threonine 462. Over residues 445–470 (TVPAAQSSAAPAAKAAATPEPAVAQP) the composition is skewed to low complexity.

This sequence belongs to the protein kinase superfamily. CAMK Ser/Thr protein kinase family. In terms of assembly, interacts with calmodulin, in the presence of calcium. Requires Ca(2+) as cofactor. As to expression, expressed in brain and weakly in eye. Not detected in liver, kidney, spleen, thymus, bladder, aorta, lung, intestine, esophagus, stomach, skeletal muscle, heart, diaphragm, uterus, tail skin, submaxillary gland, prostate, ear, epididymis, placenta, pancreas, ovary, testis, adrenal gland, parathyroid gland, thyroid gland, pineal gland, pituitary and sciatic nerve. In adult hippocampus, predominantly expressed in caudate nucleus, cortex, hypothalamus, olfactory bulb, and midbrain and faintly in pons, brainstem and spinal cord.

Its subcellular location is the cell membrane. The protein localises to the cytoplasmic vesicle membrane. Its function is as follows. Has no detectable kinase activity in vitro. In Rattus norvegicus (Rat), this protein is CaM kinase-like vesicle-associated protein (Camkv).